The primary structure comprises 106 residues: Transcription initiation factor IIA subunit 2 (106 aa).

The protein belongs to the TFIIA subunit 2 family. In terms of assembly, TFIIA is a heterodimer of the large unprocessed subunit 1 and a small subunit gamma. It was originally believed to be a heterotrimer of an alpha (p30), a beta (p20) and a gamma (p14) subunit. Forms a complex with Moonshiner/CG12721 and Trf2. In terms of tissue distribution, ubiquitous.

It is found in the nucleus. Its function is as follows. TFIIA is a component of the transcription machinery of RNA polymerase II and plays an important role in transcriptional activation. TFIIA in a complex with TBP mediates transcriptional activity. Part of a rhi-dependent transcription machinery that enables the generation of piRNA precursors from heterochromatin while maintaining the suppression of transposon-encoded promoters and enhancers. Forms a complex with Moonshiner/CG12721 and Trf2 which recruit transcriptional machinery to heterochromatin to initiate the bidirectional transcription of piRNA clusters, by interacting with the RDC (rhi, del and cuff) complex that binds to repressive H3K9me3 marks in the chromatin. This mechanism allows transcription to occur in piRNA clusters despite the lack of proper promoter elements and in the presence of the repressive H3K9me3 mark. The sequence is that of Transcription initiation factor IIA subunit 2 (TfIIA-S) from Drosophila melanogaster (Fruit fly).